The sequence spans 738 residues: 1,4-alpha-glucan branching enzyme GlgB (738 aa).

Aspartate 399 serves as the catalytic Nucleophile. The Proton donor role is filled by glutamate 452.

It belongs to the glycosyl hydrolase 13 family. GlgB subfamily. Monomer.

It carries out the reaction Transfers a segment of a (1-&gt;4)-alpha-D-glucan chain to a primary hydroxy group in a similar glucan chain.. The protein operates within glycan biosynthesis; glycogen biosynthesis. In terms of biological role, catalyzes the formation of the alpha-1,6-glucosidic linkages in glycogen by scission of a 1,4-alpha-linked oligosaccharide from growing alpha-1,4-glucan chains and the subsequent attachment of the oligosaccharide to the alpha-1,6 position. In Chlamydia trachomatis serovar L2 (strain ATCC VR-902B / DSM 19102 / 434/Bu), this protein is 1,4-alpha-glucan branching enzyme GlgB.